Here is a 284-residue protein sequence, read N- to C-terminus: L-ribulose-5-phosphate 3-epimerase UlaE (284 aa).

The protein belongs to the L-ribulose-5-phosphate 3-epimerase family.

It catalyses the reaction L-ribulose 5-phosphate = L-xylulose 5-phosphate. It functions in the pathway cofactor degradation; L-ascorbate degradation; D-xylulose 5-phosphate from L-ascorbate: step 3/4. Functionally, catalyzes the isomerization of L-xylulose-5-phosphate to L-ribulose-5-phosphate. Is involved in the anaerobic L-ascorbate utilization. This Shigella flexneri protein is L-ribulose-5-phosphate 3-epimerase UlaE.